The following is a 468-amino-acid chain: UDP-N-acetylmuramate--L-alanine ligase (468 aa).

112–118 (GTHGKTT) is a binding site for ATP.

This sequence belongs to the MurCDEF family.

Its subcellular location is the cytoplasm. It carries out the reaction UDP-N-acetyl-alpha-D-muramate + L-alanine + ATP = UDP-N-acetyl-alpha-D-muramoyl-L-alanine + ADP + phosphate + H(+). It participates in cell wall biogenesis; peptidoglycan biosynthesis. Cell wall formation. This is UDP-N-acetylmuramate--L-alanine ligase from Bordetella petrii (strain ATCC BAA-461 / DSM 12804 / CCUG 43448).